Consider the following 375-residue polypeptide: 23S rRNA (uracil(747)-C(5))-methyltransferase RlmC (375 aa).

Residues cysteine 3, cysteine 11, cysteine 14, and cysteine 87 each contribute to the [4Fe-4S] cluster site. Positions 212, 241, 262, and 307 each coordinate S-adenosyl-L-methionine. Cysteine 334 acts as the Nucleophile in catalysis.

Belongs to the class I-like SAM-binding methyltransferase superfamily. RNA M5U methyltransferase family. RlmC subfamily.

The catalysed reaction is uridine(747) in 23S rRNA + S-adenosyl-L-methionine = 5-methyluridine(747) in 23S rRNA + S-adenosyl-L-homocysteine + H(+). Functionally, catalyzes the formation of 5-methyl-uridine at position 747 (m5U747) in 23S rRNA. This is 23S rRNA (uracil(747)-C(5))-methyltransferase RlmC from Cronobacter sakazakii (strain ATCC BAA-894) (Enterobacter sakazakii).